The sequence spans 201 residues: Calcium channel flower (201 aa).

Transmembrane regions (helical) follow at residues 37-57 (LGIV…LSII), 59-79 (LSVS…VVMA), and 103-120 (PMYF…PPIF).

It belongs to the calcium channel flower family. Homomultimer. Associates with the dally/ magu complex.

The protein resides in the cell membrane. Its subcellular location is the cytoplasmic vesicle. The protein localises to the secretory vesicle. It localises to the synaptic vesicle membrane. It is found in the presynaptic cell membrane. The protein resides in the endosome. Its activity is regulated as follows. Channel activity is inhibited by La(3+), which reduces Ca(2+) influx and thus inhibits it's function in promoting activity-dependent bulk endocytosis (ADBE) in response to high stimuli. In terms of biological role, transmembrane protein which mediates synaptic endocytosis, fitness-based cell culling, neuronal culling, morphogen gradient scaling, and calcium transport. Regulates synaptic endocytosis and hence couples exo- with endocytosis. Controls two major modes of synaptic vesicle (SV) endocytosis in the synaptic boutons of neuromuscular junctions (NMJs); Ca(2+) channel-independent Clathrin-mediated endocytosis (CME) in response to mild stimulation, and Ca(2+) channel-dependent activity-dependent bulk endocytosis (ADBE) in response to strong stimulation. Functions in ADBE and subsequent SV reformation from bulk endosomes by initiating Ca(2+) channel-dependent phosphatidylinositol 4,5-bisphosphate (PtdIns(4,5)P2) compartmentalization in synaptic boutons. There it acts at the periactive zone to provide the low Ca(2+) levels required to initiate Calcineurin activation and upregulate PtdIns(4,5)P2. Conversely PtdIns(4,5)P2 enhances fwe Ca(2+) channel-activity, establishing a positive feedback loop that induces PtdIns(4,5)P2 microdomain at the periactive zone. These microdomains trigger bulk membrane invagination (i.e. ADBE) by triggering actin polymerization while also promoting localization of fwe to bulk endosomes, thereby removing the ADBE trigger to reduce endocytosis and prevent excess membrane uptake. PtdIns(4,5)P2 then promotes SV reformation from the bulk endosomes, to coordinate ADBE and subsequent SV reformation. Different combinations of the flower isoforms at the cell membrane are also required for the identification and elimination of suboptimal or supernumerary cells during development, regeneration, and adulthood. Required for the recognition and elimination of unfit cells in the developing wing during cell competition. In the developing pupal retina, mediates the elimination of unwanted postmitotic neurons, including supernumerary photoreceptor neurons that form at the periphery of the retina and are contained within incomplete ommatidia units. Also required for efficient elimination and replacement of old neurons by newly generated neurons during regeneration in the adult brain following mechanical injury. Downstream of the flower fitness fingerprints, cells identified as unwanted or unfit are eliminated via apoptosis through the expression of ahuizotl (azot). However, the cells marked for elimination by the flower isoforms only undergo apoptosis if additional thresholds are met; (1) their neighboring fit/healthy cells express different levels of the fwe isoforms, and (2) the levels of the protective signal SPARC expressed by the loser or unwanted cells are unable to inhibit caspase activation. These additional thresholds for flower-mediated apoptosis, allows useful cells to recover from transient and limited stress before they are unnecessarily eliminated. Functions with dally and magu in a mechanism of scaling, which utilises apoptosis to ensure that the dpp morphogen gradient, which mediates organ growth, remains proportional to the size of the growing wing. In this mechanism, fwe represses dally- and Magu-dependent activity in expanding the gradient, and dally/Magu inhibits fwe-dependent apoptosis to keep cell death rate low. When the levels of these different proteins are optimally regulated the gradient correctly scales with organ growth but when this fails, fwe-mediated apoptosis is activated to trim the developing tissue to match the correct size of the gradient. The protein is Calcium channel flower of Drosophila willistoni (Fruit fly).